The chain runs to 303 residues: Nucleotide-binding protein Dvul_1502 (303 aa).

Residue 23–30 (GLSGAGKS) participates in ATP binding. 75–78 (DLRE) serves as a coordination point for GTP.

This sequence belongs to the RapZ-like family.

Functionally, displays ATPase and GTPase activities. This is Nucleotide-binding protein Dvul_1502 from Nitratidesulfovibrio vulgaris (strain DP4) (Desulfovibrio vulgaris).